Here is a 590-residue protein sequence, read N- to C-terminus: L-fucose isomerase (590 aa).

Residues Glu337 and Asp361 each act as proton acceptor in the active site. The Mn(2+) site is built by Glu337, Asp361, and His528.

The protein belongs to the L-fucose isomerase family. Mn(2+) is required as a cofactor.

It localises to the cytoplasm. The enzyme catalyses L-fucose = L-fuculose. It functions in the pathway carbohydrate degradation; L-fucose degradation; L-lactaldehyde and glycerone phosphate from L-fucose: step 1/3. Its function is as follows. Converts the aldose L-fucose into the corresponding ketose L-fuculose. The polypeptide is L-fucose isomerase (Bacteroides fragilis (strain ATCC 25285 / DSM 2151 / CCUG 4856 / JCM 11019 / LMG 10263 / NCTC 9343 / Onslow / VPI 2553 / EN-2)).